The sequence spans 173 residues: Glutamyl-tRNA(Gln) amidotransferase subunit F, mitochondrial (173 aa).

The transit peptide at 1 to 15 (MSRFMIRAVFFRRYT) directs the protein to the mitochondrion.

It belongs to the GatF family. In terms of assembly, subunit of the heterotrimeric GatFAB amidotransferase (AdT) complex, composed of A, B and F subunits.

The protein localises to the mitochondrion inner membrane. The catalysed reaction is L-glutamyl-tRNA(Gln) + L-glutamine + ATP + H2O = L-glutaminyl-tRNA(Gln) + L-glutamate + ADP + phosphate + H(+). In terms of biological role, allows the formation of correctly charged Gln-tRNA(Gln) through the transamidation of misacylated Glu-tRNA(Gln) in the mitochondria. The reaction takes place in the presence of glutamine and ATP through an activated gamma-phospho-Glu-tRNA(Gln). Required for proper protein synthesis within the mitochondrion. This is Glutamyl-tRNA(Gln) amidotransferase subunit F, mitochondrial from Candida glabrata (strain ATCC 2001 / BCRC 20586 / JCM 3761 / NBRC 0622 / NRRL Y-65 / CBS 138) (Yeast).